The primary structure comprises 721 residues: Quinolinate synthase, chloroplastic (721 aa).

A chloroplast-targeting transit peptide spans 1–67; that stretch reads MDAANLVMKS…KIPSNNSTFT (67 aa). Catalysis depends on Cys-133, which acts as the Cysteine persulfide intermediate. Iminosuccinate-binding residues include His-283 and Ser-309. Residue Cys-363 coordinates [4Fe-4S] cluster. Iminosuccinate is bound by residues 392 to 394 and Ser-414; that span reads YIN. Position 487 (Cys-487) interacts with [4Fe-4S] cluster. Residues 513-515 and Thr-538 contribute to the iminosuccinate site; that span reads HFE. Cys-643 contributes to the [4Fe-4S] cluster binding site.

This sequence belongs to the quinolinate synthase family. Type 1 subfamily. Homodimer. [4Fe-4S] cluster is required as a cofactor.

It is found in the plastid. The protein resides in the chloroplast. The catalysed reaction is iminosuccinate + dihydroxyacetone phosphate = quinolinate + phosphate + 2 H2O + H(+). Its pathway is alkaloid biosynthesis; nicotine biosynthesis. It participates in cofactor biosynthesis; NAD(+) biosynthesis; quinolinate from iminoaspartate: step 1/1. Involved in the biosynthesis of pyridine alkaloid natural products, leading mainly to the production of anabasine, anatabine, nicotine and nornicotine, effective deterrents against herbivores with antiparasitic and pesticide properties (neurotoxins); nornicotine serves as the precursor in the synthesis of the carcinogen compound N'-nitrosonornicotine (NNN). Catalyzes the condensation of iminoaspartate with dihydroxyacetone phosphate to form quinolinate. This Nicotiana tabacum (Common tobacco) protein is Quinolinate synthase, chloroplastic.